The chain runs to 113 residues: Small ribosomal subunit protein mS41 (113 aa).

The transit peptide at 1 to 22 (MLILKRIFIIRNFIFPFSNCRY) directs the protein to the mitochondrion.

This sequence belongs to the mitochondrion-specific ribosomal protein mS41 family. In terms of assembly, component of the mitochondrial small ribosomal subunit (mt-SSU). Mature yeast 74S mitochondrial ribosomes consist of a small (37S) and a large (54S) subunit. The 37S small subunit contains a 15S ribosomal RNA (15S mt-rRNA) and at least 32 different proteins. The 54S large subunit contains a 21S rRNA (21S mt-rRNA) and at least 45 different proteins.

The protein localises to the mitochondrion. Functionally, component of the mitochondrial ribosome (mitoribosome), a dedicated translation machinery responsible for the synthesis of mitochondrial genome-encoded proteins, including at least some of the essential transmembrane subunits of the mitochondrial respiratory chain. The mitoribosomes are attached to the mitochondrial inner membrane and translation products are cotranslationally integrated into the membrane. mS41 is involved in telomere length regulation. The protein is Small ribosomal subunit protein mS41 (fyv4) of Schizosaccharomyces pombe (strain 972 / ATCC 24843) (Fission yeast).